The primary structure comprises 782 residues: Beta-mannosyltransferase 9 (782 aa).

The Cytoplasmic segment spans residues 1–26; the sequence is MEKLIQSTISLFISLSLKISTKSYKS. Residues 27–47 traverse the membrane as a helical segment; sequence IISILFIISLLSIILTTTITV. At 48-782 the chain is on the extracellular side; the sequence is YHDPERIITT…GKDKGKDKSN (735 aa). Residues 66–96 form a disordered region; that stretch reads KSVFTASSPKQQDKLQQEIDQHQSDNSHEQQ. Residues 76–96 show a composition bias toward basic and acidic residues; that stretch reads QQDKLQQEIDQHQSDNSHEQQ. Residues N445, N648, and N699 are each glycosylated (N-linked (GlcNAc...) asparagine).

It belongs to the BMT family.

The protein localises to the membrane. Its function is as follows. Beta-mannosyltransferase involved in cell wall biosynthesis through beta-1,2-mannosylation of cell wall phosphopeptidomannan. The polypeptide is Beta-mannosyltransferase 9 (BMT9) (Candida albicans (strain SC5314 / ATCC MYA-2876) (Yeast)).